We begin with the raw amino-acid sequence, 88 residues long: YcgL domain-containing protein CGSHiGG_01115 (88 aa).

A YcgL domain is found at 1 to 85 (MLCAIYKSKK…QDDGLFNSLS (85 aa)).

The polypeptide is YcgL domain-containing protein CGSHiGG_01115 (Haemophilus influenzae (strain PittGG)).